The primary structure comprises 167 residues: ATP synthase subunit b (167 aa).

Residues 7-25 (SFLLAVSFVIFIYLIYRPA) traverse the membrane as a helical segment.

This sequence belongs to the ATPase B chain family. As to quaternary structure, F-type ATPases have 2 components, F(1) - the catalytic core - and F(0) - the membrane proton channel. F(1) has five subunits: alpha(3), beta(3), gamma(1), delta(1), epsilon(1). F(0) has three main subunits: a(1), b(2) and c(10-14). The alpha and beta chains form an alternating ring which encloses part of the gamma chain. F(1) is attached to F(0) by a central stalk formed by the gamma and epsilon chains, while a peripheral stalk is formed by the delta and b chains.

Its subcellular location is the cell inner membrane. Functionally, f(1)F(0) ATP synthase produces ATP from ADP in the presence of a proton or sodium gradient. F-type ATPases consist of two structural domains, F(1) containing the extramembraneous catalytic core and F(0) containing the membrane proton channel, linked together by a central stalk and a peripheral stalk. During catalysis, ATP synthesis in the catalytic domain of F(1) is coupled via a rotary mechanism of the central stalk subunits to proton translocation. Component of the F(0) channel, it forms part of the peripheral stalk, linking F(1) to F(0). This chain is ATP synthase subunit b, found in Rickettsia typhi (strain ATCC VR-144 / Wilmington).